The sequence spans 88 residues: Cell division topological specificity factor (88 aa).

The protein belongs to the MinE family.

Its function is as follows. Prevents the cell division inhibition by proteins MinC and MinD at internal division sites while permitting inhibition at polar sites. This ensures cell division at the proper site by restricting the formation of a division septum at the midpoint of the long axis of the cell. The protein is Cell division topological specificity factor of Psychromonas ingrahamii (strain DSM 17664 / CCUG 51855 / 37).